Here is a 72-residue protein sequence, read N- to C-terminus: Caerin-regulated peptide (72 aa).

Positions 1-22 are cleaved as a signal peptide; the sequence is MAFLKKSLLLVLFLGLVSLSIC. The propeptide occupies 23–43; the sequence is DEEKRENEDEEEQEDDEQSEE. Residues 24 to 46 are disordered; it reads EEKRENEDEEEQEDDEQSEEKRG. The span at 30-41 shows a compositional bias: acidic residues; sequence EDEEEQEDDEQS.

Expressed by the skin glands.

It is found in the secreted. Its function is as follows. Has antibacterial activity against Gram-positive bacterium M.luteus NCT C2665 and against Gram-negative bacterium E.coli K12D31. The protein is Caerin-regulated peptide of Agalychnis callidryas (Red-eyed tree frog).